Here is a 910-residue protein sequence, read N- to C-terminus: MNMIQNILRVVFGSKFERDLKKLIPIVRQINSLEESIKGMDDSTLSSQTKKFKERIVQGESLDSILPEAFATVREVSLRTMGMRHFDVQMMGGIALHGGNISEMKTGEGKTLTSTLAVYLNSLAGNGVHVVTVNDYLAKRDANWMKPIYDFLGISVGVIQHDMDHEQRKVAYAADITYGTNNEFGFDYLRDNMVSHKDHKVQRSHFFAIVDEVDSILIDEARTPLIISGPSDEATDKYVRVNKIIPKLSEGEDFEVDEKARNVLLTEKGVSHVEEILSIENLYAPENVDLVHHVHQALKAHKIFRVDKDYVVQQGQVVIIDEFTGRPMEGRRYSDGLHQAIEAKENVTIAKESQTLASITFQNYFRMYDKLAGMTGTADTEAEEFKKIYNLDVIVIPPNVSVQRKDSPDRVYRTEKEKFQAILTEIRELQSKKQPVLVGTISIEKSEVLSKMLASAGIQHNVLNAKFHQKEAEIVANAGKPGAVTIATNMAGRGTDIVLGGAQLYKENLETWKDEDEIVKQFKESILRQNLEYAESLMQKMDSGTKQKRASEILSSVKIWKKNHEEVLAAGGLHILGTERHEARRIDNQLRGRSGRQGDPGSSRFYLSLQDDLMRIFGSDRISGLMKWANMPEGQEIESKMVSNAIARAQKRVEGHNFDIRKHLLEYDDVMNRQRIVIYKMRNEVLENEDISPLISGFIEETVENQIVTHCEGNNPSAWNLESLKEWSDGLDLNLQIDEVEFKKSKNPQLSLFEKVSSTAKLKYESKAEKIGKDIWKLLERNIFLDILDHRWKEHLYSMDHLREGIWTVGYSERNPLVEYKLQGFRMFDTAIENLKNEIVNFIFRVEVSENSKLPEEKKEYKKVGQEITGGFQEFSGGNLNRSQSNGSSVTVTTSSGGGTERKTSRRRKR.

ATP is bound by residues Q89, 107–111 (GEGKT), and D496. The tract at residues 873-910 (QEFSGGNLNRSQSNGSSVTVTTSSGGGTERKTSRRRKR) is disordered. A compositionally biased stretch (polar residues) spans 876 to 886 (SGGNLNRSQSN).

This sequence belongs to the SecA family. As to quaternary structure, monomer and homodimer. Part of the essential Sec protein translocation apparatus which comprises SecA, SecYEG and auxiliary proteins SecDF. Other proteins may also be involved.

It is found in the cell inner membrane. The protein resides in the cytoplasm. The catalysed reaction is ATP + H2O + cellular proteinSide 1 = ADP + phosphate + cellular proteinSide 2.. Functionally, part of the Sec protein translocase complex. Interacts with the SecYEG preprotein conducting channel. Has a central role in coupling the hydrolysis of ATP to the transfer of proteins into and across the cell membrane, serving as an ATP-driven molecular motor driving the stepwise translocation of polypeptide chains across the membrane. The polypeptide is Protein translocase subunit SecA (Leptospira interrogans serogroup Icterohaemorrhagiae serovar copenhageni (strain Fiocruz L1-130)).